Here is a 78-residue protein sequence, read N- to C-terminus: Acyl carrier protein (78 aa).

Positions 2-77 (SDIAERVKKI…DAIKFLEKNA (76 aa)) constitute a Carrier domain. The residue at position 37 (Ser-37) is an O-(pantetheine 4'-phosphoryl)serine.

The protein belongs to the acyl carrier protein (ACP) family. 4'-phosphopantetheine is transferred from CoA to a specific serine of apo-ACP by AcpS. This modification is essential for activity because fatty acids are bound in thioester linkage to the sulfhydryl of the prosthetic group.

Its subcellular location is the cytoplasm. The protein operates within lipid metabolism; fatty acid biosynthesis. Functionally, carrier of the growing fatty acid chain in fatty acid biosynthesis. The sequence is that of Acyl carrier protein from Xanthobacter autotrophicus (strain ATCC BAA-1158 / Py2).